The sequence spans 297 residues: Lipoyl synthase (297 aa).

[4Fe-4S] cluster contacts are provided by cysteine 40, cysteine 45, cysteine 51, cysteine 67, cysteine 71, cysteine 74, and serine 280. Positions 53–269 constitute a Radical SAM core domain; it reads AVRKTATFMI…KEIALSKGFS (217 aa).

The protein belongs to the radical SAM superfamily. Lipoyl synthase family. It depends on [4Fe-4S] cluster as a cofactor.

Its subcellular location is the cytoplasm. The enzyme catalyses [[Fe-S] cluster scaffold protein carrying a second [4Fe-4S](2+) cluster] + N(6)-octanoyl-L-lysyl-[protein] + 2 oxidized [2Fe-2S]-[ferredoxin] + 2 S-adenosyl-L-methionine + 4 H(+) = [[Fe-S] cluster scaffold protein] + N(6)-[(R)-dihydrolipoyl]-L-lysyl-[protein] + 4 Fe(3+) + 2 hydrogen sulfide + 2 5'-deoxyadenosine + 2 L-methionine + 2 reduced [2Fe-2S]-[ferredoxin]. It participates in protein modification; protein lipoylation via endogenous pathway; protein N(6)-(lipoyl)lysine from octanoyl-[acyl-carrier-protein]. Functionally, catalyzes the radical-mediated insertion of two sulfur atoms into the C-6 and C-8 positions of the octanoyl moiety bound to the lipoyl domains of lipoate-dependent enzymes, thereby converting the octanoylated domains into lipoylated derivatives. The polypeptide is Lipoyl synthase (Bacillus cereus (strain ATCC 14579 / DSM 31 / CCUG 7414 / JCM 2152 / NBRC 15305 / NCIMB 9373 / NCTC 2599 / NRRL B-3711)).